A 155-amino-acid chain; its full sequence is UPF0225 protein PC1_1977 (155 aa).

This sequence belongs to the UPF0225 family.

The protein is UPF0225 protein PC1_1977 of Pectobacterium carotovorum subsp. carotovorum (strain PC1).